We begin with the raw amino-acid sequence, 504 residues long: uncharacterized protein (504 aa).

The chain crosses the membrane as a helical span at residues 26–46 (ILFLLLGLIILVNISINVTTV). A compositionally biased stretch (polar residues) spans 103–112 (PTQCSSSSTH). Disordered regions lie at residues 103 to 180 (PTQC…TRPM), 313 to 402 (YDAR…PLTT), and 431 to 504 (QRLA…GKLN). Residues 113–128 (YFRKHSNDRRSRRRYC) show a composition bias toward basic residues. Residues 135–147 (QIRQSNQQQSCHS) are compositionally biased toward polar residues. Over residues 313–324 (YDARDQWRRGTE) the composition is skewed to basic and acidic residues. Over residues 349-377 (SSQAHRQNFPSYTHSQPNHSPPQSVGYSS) the composition is skewed to polar residues. Basic and acidic residues-rich tracts occupy residues 378–389 (RESHEVRRRAPD) and 467–478 (LELKRQVQENRG). The segment covering 494-504 (SLHRSRTGKLN) has biased composition (basic residues).

The protein resides in the membrane. This is an uncharacterized protein from Rattus norvegicus (Rat).